A 192-amino-acid polypeptide reads, in one-letter code: Glycerol-3-phosphate acyltransferase (192 aa).

5 consecutive transmembrane segments (helical) span residues Met1–Leu21, Leu51–Val71, Pro78–Leu98, Val112–Phe132, and Leu155–Trp175.

This sequence belongs to the PlsY family. In terms of assembly, probably interacts with PlsX.

It localises to the cell inner membrane. The catalysed reaction is an acyl phosphate + sn-glycerol 3-phosphate = a 1-acyl-sn-glycero-3-phosphate + phosphate. Its pathway is lipid metabolism; phospholipid metabolism. Its function is as follows. Catalyzes the transfer of an acyl group from acyl-phosphate (acyl-PO(4)) to glycerol-3-phosphate (G3P) to form lysophosphatidic acid (LPA). This enzyme utilizes acyl-phosphate as fatty acyl donor, but not acyl-CoA or acyl-ACP. In Myxococcus xanthus (strain DK1622), this protein is Glycerol-3-phosphate acyltransferase.